Here is a 148-residue protein sequence, read N- to C-terminus: UPF0260 protein Maqu_1608 (148 aa).

The protein belongs to the UPF0260 family.

This is UPF0260 protein Maqu_1608 from Marinobacter nauticus (strain ATCC 700491 / DSM 11845 / VT8) (Marinobacter aquaeolei).